We begin with the raw amino-acid sequence, 885 residues long: Chromatin structure-remodeling complex protein RSC3 (885 aa).

Residues 14–42 (CVQCRKRKIGCDRVKPICGNCMKHNKMDC) constitute a DNA-binding region (zn(2)-C6 fungal-type). A phosphoserine mark is found at Ser-95 and Ser-236.

Forms a heteromer with RSC30. Interacts with LDB7 and NPL6. Component of the two forms of the RSC complex composed of at least either RSC1 or RSC2, and ARP7, ARP9, LDB7, NPL6, RSC3, RSC30, RSC4, RSC58, RSC6, RSC8, RSC9, SFH1, STH1, HTL1 and probably RTT102. The complexes interact with histone and histone variant components of centromeric chromatin. Component of a fungal-specific module (HTL1-LDB7-NPL6-RSC3-RSC30) within the RSC complex.

The protein localises to the nucleus. Functionally, component of the chromatin structure-remodeling complex (RSC), which is involved in transcription regulation and nucleosome positioning. RSC is responsible for the transfer of a histone octamer from a nucleosome core particle to naked DNA. The reaction requires ATP and involves an activated RSC-nucleosome intermediate. Remodeling reaction also involves DNA translocation, DNA twist and conformational change. As a reconfigurer of centromeric and flanking nucleosomes, RSC complex is required both for proper kinetochore function in chromosome segregation and, via a PKC1-dependent signaling pathway, for organization of the cellular cytoskeleton. This subunit is required for transcription of ribosomal protein genes and genes involved in the integrity of the cell wall, and also for proper metaphase progression. Together with HTL1, LDB7, NPL6, RSC30 components, defines a fungal-specific module within the RSC complex that plays a role in many cellular functions including the maintenance of cell wall integrity. This is Chromatin structure-remodeling complex protein RSC3 (RSC3) from Saccharomyces cerevisiae (strain ATCC 204508 / S288c) (Baker's yeast).